The sequence spans 323 residues: MSGKPPAIFLMGPTAAGKTDLAIELTKVLPCELISVDSALVYRGMDIGSAKPSREVLAAHPHRLIDIRDPAESYSAAQFRTDALQAMAEITARGKVPLLVGGTMLYYKALIDGLADMPPADAAVRAALEAQAQALGLTELHRQLAEVDPESAARIHPNDPQRLIRALEVFQVSGESMTAHRQRQFAESSGADAGAGGHLPYTVASLAIAPTDRHILHQRIALRFSQMLEQGFVDEVRSLRARSDLHAGLPSIRAVGYRQVWDYLDGKLTENEMRERGIIATRQLAKRQFTWLRGWSDVHWLDSLACDNLSRTLKYLGAISILS.

Position 12 to 19 (G12 to T19) interacts with ATP. A substrate-binding site is contributed by T14 to T19. 2 interaction with substrate tRNA regions span residues D37 to L40 and Q161 to R165.

The protein belongs to the IPP transferase family. Monomer. Mg(2+) serves as cofactor.

It carries out the reaction adenosine(37) in tRNA + dimethylallyl diphosphate = N(6)-dimethylallyladenosine(37) in tRNA + diphosphate. Its function is as follows. Catalyzes the transfer of a dimethylallyl group onto the adenine at position 37 in tRNAs that read codons beginning with uridine, leading to the formation of N6-(dimethylallyl)adenosine (i(6)A). This is tRNA dimethylallyltransferase from Pseudomonas putida (strain W619).